Here is a 225-residue protein sequence, read N- to C-terminus: Lectin (225 aa).

Homotetramer.

Chitin-binding lectin. Agglutinates rabbit erythrocytes, but not human erythrocytes. In Vachellia farnesiana (Sweet acacia), this protein is Lectin.